Here is a 141-residue protein sequence, read N- to C-terminus: Nucleoside diphosphate kinase (141 aa).

ATP-binding residues include Lys-11, Phe-59, Arg-87, Thr-93, Arg-104, and Asn-114. His-117 serves as the catalytic Pros-phosphohistidine intermediate.

The protein belongs to the NDK family. Homotetramer. Mg(2+) serves as cofactor.

It localises to the cytoplasm. The catalysed reaction is a 2'-deoxyribonucleoside 5'-diphosphate + ATP = a 2'-deoxyribonucleoside 5'-triphosphate + ADP. It catalyses the reaction a ribonucleoside 5'-diphosphate + ATP = a ribonucleoside 5'-triphosphate + ADP. Its function is as follows. Major role in the synthesis of nucleoside triphosphates other than ATP. The ATP gamma phosphate is transferred to the NDP beta phosphate via a ping-pong mechanism, using a phosphorylated active-site intermediate. The sequence is that of Nucleoside diphosphate kinase from Pseudomonas putida (strain ATCC 47054 / DSM 6125 / CFBP 8728 / NCIMB 11950 / KT2440).